Consider the following 309-residue polypeptide: Olfactory receptor 7A10 (309 aa).

Residues 1-25 lie on the Extracellular side of the membrane; sequence MKSWNNTIILEFLLLGISEEPELQA. The N-linked (GlcNAc...) asparagine glycan is linked to Asn5. Residues 26 to 46 form a helical membrane-spanning segment; that stretch reads FLFGLFLSMYLVTVLGNLLII. Residues 47-54 lie on the Cytoplasmic side of the membrane; sequence LATISDSH. The helical transmembrane segment at 55–75 threads the bilayer; sequence LHTPMYFFLSNLSFVDICFVS. At 76 to 99 the chain is on the extracellular side; it reads TTVPKMLVNIQTHNKVITYAGCIT. Cys97 and Cys189 are joined by a disulfide. Residues 100-120 traverse the membrane as a helical segment; it reads QMCFFLLFVGLDNFLLTVMAY. The Cytoplasmic portion of the chain corresponds to 121–139; sequence DRFVAICHPLHYMVIMNPQ. A helical transmembrane segment spans residues 140–160; that stretch reads LCGLLVLASWIMSVLNSMLQS. The Extracellular segment spans residues 161-197; sequence LMVLPLPFCTHMEIPHFFCEINQVVHLACSDTFLNDI. A helical transmembrane segment spans residues 198–217; that stretch reads VMYFAVALLGGGPLTGILYS. The Cytoplasmic portion of the chain corresponds to 218–237; it reads YSKIVSSIRAISSAQGKYKA. A helical membrane pass occupies residues 238–258; sequence FSTCASHLSVVSLFYGTCLGV. Residues 259-271 are Extracellular-facing; it reads YLSSAATHNSHTG. A helical transmembrane segment spans residues 272–292; the sequence is AAASVMYTVVTPMLNPFIYSL. Residues 293–309 lie on the Cytoplasmic side of the membrane; it reads RNKHIKGAMKTFFRGKQ.

The protein belongs to the G-protein coupled receptor 1 family.

The protein resides in the cell membrane. In terms of biological role, odorant receptor. The protein is Olfactory receptor 7A10 (OR7A10) of Homo sapiens (Human).